The chain runs to 60 residues: Large ribosomal subunit protein bL32 (60 aa).

Residues 1–19 (MAVPKRKKSKSRRNMHRSH) are compositionally biased toward basic residues. The disordered stretch occupies residues 1–24 (MAVPKRKKSKSRRNMHRSHHAIEP).

This sequence belongs to the bacterial ribosomal protein bL32 family.

This chain is Large ribosomal subunit protein bL32, found in Wolbachia pipientis wMel.